A 252-amino-acid polypeptide reads, in one-letter code: Chitooligosaccharide deacetylase (252 aa).

The Mg(2+) site is built by His61 and His125.

Belongs to the YdjC deacetylase family. ChbG subfamily. Homodimer. Requires Mg(2+) as cofactor.

It is found in the cytoplasm. The catalysed reaction is N,N'-diacetylchitobiose + H2O = N-acetyl-beta-D-glucosaminyl-(1-&gt;4)-D-glucosamine + acetate. It carries out the reaction diacetylchitobiose-6'-phosphate + H2O = N'-monoacetylchitobiose-6'-phosphate + acetate. It functions in the pathway glycan degradation; chitin degradation. Involved in the degradation of chitin. ChbG is essential for growth on the acetylated chitooligosaccharides chitobiose and chitotriose but is dispensable for growth on cellobiose and chitosan dimer, the deacetylated form of chitobiose. Deacetylation of chitobiose-6-P and chitotriose-6-P is necessary for both the activation of the chb promoter by the regulatory protein ChbR and the hydrolysis of phosphorylated beta-glucosides by the phospho-beta-glucosidase ChbF. Catalyzes the removal of only one acetyl group from chitobiose-6-P to yield monoacetylchitobiose-6-P, the inducer of ChbR and the substrate of ChbF. The chain is Chitooligosaccharide deacetylase from Escherichia coli O45:K1 (strain S88 / ExPEC).